We begin with the raw amino-acid sequence, 69 residues long: Bacteriocin microcin B17 (69 aa).

Residues 1–26 (MELKASEFGVVLSVDALKLSRQSPLG) constitute a propeptide that is removed on maturation. The oxazole-4-carboxylic acid (Gly-Ser) cross-link spans 39–40 (GS). The thiazole-4-carboxylic acid (Ser-Cys) cross-link spans 40 to 41 (SC). 3 cross-links (thiazole-4-carboxylic acid (Gly-Cys)) span residues 47-48 (GC), 50-51 (GC), and 54-55 (GC). A cross-link (oxazole-4-carboxylic acid (Cys-Ser)) is located at residues 55–56 (CS). Cross-links (oxazole-4-carboxylic acid (Gly-Ser)) lie at residues 61–62 (GS) and 64–65 (GS).

The processed N-terminus does not resemble a typical secretion signal sequence. In terms of processing, maturation of thiazole and oxazole containing antibiotics involves the enzymatic condensation of a Cys, Ser or Thr with the alpha-carbonyl of the preceding amino acid to form a thioether or ether bond, then dehydration to form a double bond with the alpha-amino nitrogen. Thiazoline or oxazoline rings are dehydrogenated to form thiazole or oxazole rings.

In terms of biological role, this glycine-rich peptide antibiotic inhibits DNA replication in many enteric bacteria, that leads to induction of the SOS repair system, massive DNA degradation and cell death. B17 inhibits type II topoisomerase by trapping an enzyme - DNA cleavable complex. This is Bacteriocin microcin B17 (mcbA) from Escherichia coli.